A 397-amino-acid chain; its full sequence is Lysophospholipid transporter LplT (397 aa).

The Periplasmic portion of the chain corresponds to 1–17 (MSESVHTNTSLWSKGMK). The chain crosses the membrane as a helical span at residues 18–38 (AVIVAQFLSAFGDNALLFATL). Topologically, residues 39–52 (ALLKAQFYPEWSQP) are cytoplasmic. Residues 53–73 (VLQMVFVGAYILFAPFVGQVA) traverse the membrane as a helical segment. The Periplasmic portion of the chain corresponds to 74–90 (DSFAKGRVMMFANGLKL). The helical transmembrane segment at 91-111 (LGAASICFGFNPFVGYTLVGI) threads the bilayer. Over 112-144 (GAAAYSPAKYGILGELTTGDKLVKANGLMEAST) the chain is Cytoplasmic. A helical membrane pass occupies residues 145–165 (IAAILLGSVAGGVLADLHVLV). Ala166 is a topological domain (periplasmic). A helical transmembrane segment spans residues 167-187 (LAACALAYAGAVAANIYIPKL). Over 188–226 (AAARPGQSWNVLKMTCSFKSACTSLWQNGETRFSLVGTS) the chain is Cytoplasmic. The helical transmembrane segment at 227–247 (LFWGAGVTLRFLLVLWVPVAL) threads the bilayer. The Periplasmic segment spans residues 248–256 (GITDNATPT). A helical membrane pass occupies residues 257 to 277 (YLNAMVAIGIVLGAGAAAKLV). Topologically, residues 278–280 (TLE) are cytoplasmic. The helical transmembrane segment at 281 to 301 (TVSRCMPAGILIGVVVLFFSL) threads the bilayer. Topologically, residues 302–304 (QHE) are periplasmic. A helical transmembrane segment spans residues 305–325 (LLPAYALLMLIGVLGGFFVVP). The Cytoplasmic segment spans residues 326 to 343 (LNALLQERGKKSVGAGNA). Residues 344 to 364 (IAVQNLGENSAMLLMLGIYSL) form a helical membrane-spanning segment. Topologically, residues 365-366 (AV) are periplasmic. The helical transmembrane segment at 367–387 (LVGIPVVPIGIGFGTLFALAI) threads the bilayer. Residues 388–397 (TALWIWQRRH) lie on the Cytoplasmic side of the membrane.

The protein belongs to the major facilitator superfamily. LplT (TC 2.A.1.42) family.

Its subcellular location is the cell inner membrane. Catalyzes the facilitated diffusion of 2-acyl-glycero-3-phosphoethanolamine (2-acyl-GPE) into the cell. The polypeptide is Lysophospholipid transporter LplT (Escherichia fergusonii (strain ATCC 35469 / DSM 13698 / CCUG 18766 / IAM 14443 / JCM 21226 / LMG 7866 / NBRC 102419 / NCTC 12128 / CDC 0568-73)).